Consider the following 127-residue polypeptide: UPF0102 protein Mmar10_3014 (127 aa).

Belongs to the UPF0102 family.

The polypeptide is UPF0102 protein Mmar10_3014 (Maricaulis maris (strain MCS10) (Caulobacter maris)).